A 75-amino-acid polypeptide reads, in one-letter code: Rugosin-LK1 (75 aa).

Residues 1–22 form the signal peptide; the sequence is MFTMKKSLLFLFFLGTISLSFC. A propeptide spanning residues 23-40 is cleaved from the precursor; it reads EEERSADEDDEGEMTEEE.

In terms of tissue distribution, expressed by the skin glands.

It is found in the secreted. Has antimicrobial activity against Gram-positive bacteria S.aureus ATCC 2592 (MIC=10.0 uM), S.aureus ATCC 43300 (MIC=15.0 uM) and B.subtilis (MIC=40.0 uM), against Gram-negative bacteria E.coli ML-35P (MIC=10.0 uM), P.aeruginosa PA01 (MIC=5.0 uM) and P.aeruginosa ATCC 27853 (MIC=5.0 uM) and against fungus C.albicans ATCC 2002 (MIC=10.0 uM). The chain is Rugosin-LK1 from Limnonectes kuhlii (Kuhl's Creek frog).